The sequence spans 109 residues: Large ribosomal subunit protein uL24 (109 aa).

This sequence belongs to the universal ribosomal protein uL24 family. In terms of assembly, part of the 50S ribosomal subunit.

Its function is as follows. One of two assembly initiator proteins, it binds directly to the 5'-end of the 23S rRNA, where it nucleates assembly of the 50S subunit. In terms of biological role, one of the proteins that surrounds the polypeptide exit tunnel on the outside of the subunit. This chain is Large ribosomal subunit protein uL24, found in Ehrlichia ruminantium (strain Gardel).